Consider the following 117-residue polypeptide: Iron-sulfur cluster insertion protein ErpA (117 aa).

The iron-sulfur cluster site is built by Cys-45, Cys-109, and Cys-111.

It belongs to the HesB/IscA family. Homodimer. It depends on iron-sulfur cluster as a cofactor.

In terms of biological role, required for insertion of 4Fe-4S clusters for at least IspG. The chain is Iron-sulfur cluster insertion protein ErpA from Blochmanniella pennsylvanica (strain BPEN).